The primary structure comprises 468 residues: Effector protein hopD2 (468 aa).

The span at 1–20 shows a compositional bias: polar residues; sequence MNPLQPIQHSITNSQMSGGQ. Positions 1–35 are disordered; sequence MNPLQPIQHSITNSQMSGGQQLEAEGSQAHNSYSH. The Tyrosine-protein phosphatase domain occupies 143–468; it reads DASSPPSAND…TQWRAKIALE (326 aa). Residue cysteine 378 is the Phosphocysteine intermediate of the active site.

Interacts with EFR and FLS2 (via the kinase and cytoplasmic domains).

The protein resides in the secreted. The catalysed reaction is O-phospho-L-tyrosyl-[protein] + H2O = L-tyrosyl-[protein] + phosphate. Inhibited by sodium orthovanadate. Its function is as follows. Effector showing tyrosine-phosphatase activity required for host defense suppression. Functions inside plant cells causing suppression of HR (hypersensitive response), PR1 gene expression and oxidative burst probably by interfering with a MAPK (mitogen-activated protein kinase) pathway. MAPK cascades are known to activate defense-related transcription factors. Inhibits plant pattern-recognition receptors (PRRs) activation. The protein is Effector protein hopD2 (hopD2) of Pseudomonas syringae pv. tomato (strain ATCC BAA-871 / DC3000).